We begin with the raw amino-acid sequence, 417 residues long: NADH-quinone oxidoreductase subunit D (417 aa).

The protein belongs to the complex I 49 kDa subunit family. In terms of assembly, NDH-1 is composed of 14 different subunits. Subunits NuoB, C, D, E, F, and G constitute the peripheral sector of the complex.

It localises to the cell inner membrane. It catalyses the reaction a quinone + NADH + 5 H(+)(in) = a quinol + NAD(+) + 4 H(+)(out). NDH-1 shuttles electrons from NADH, via FMN and iron-sulfur (Fe-S) centers, to quinones in the respiratory chain. The immediate electron acceptor for the enzyme in this species is believed to be ubiquinone. Couples the redox reaction to proton translocation (for every two electrons transferred, four hydrogen ions are translocated across the cytoplasmic membrane), and thus conserves the redox energy in a proton gradient. In Burkholderia vietnamiensis (strain G4 / LMG 22486) (Burkholderia cepacia (strain R1808)), this protein is NADH-quinone oxidoreductase subunit D.